A 437-amino-acid chain; its full sequence is GTPase Obg (437 aa).

Residues 2-160 (SMFLDTAKIK…RNLELELKVL (159 aa)) enclose the Obg domain. In terms of domain architecture, OBG-type G spans 161-338 (ADVGLVGFPS…LLEATAELLE (178 aa)). Residues 167 to 174 (GFPSVGKS), 192 to 196 (FTTIV), 214 to 217 (DLPG), 284 to 287 (NKMD), and 319 to 321 (SGI) each bind GTP. Residues serine 174 and threonine 194 each contribute to the Mg(2+) site. The OCT domain maps to 359–437 (GFNPDEPEFA…IGKFEFEFVD (79 aa)).

The protein belongs to the TRAFAC class OBG-HflX-like GTPase superfamily. OBG GTPase family. Monomer. Mg(2+) is required as a cofactor.

It localises to the cytoplasm. An essential GTPase which binds GTP, GDP and possibly (p)ppGpp with moderate affinity, with high nucleotide exchange rates and a fairly low GTP hydrolysis rate. Plays a role in control of the cell cycle, stress response, ribosome biogenesis and in those bacteria that undergo differentiation, in morphogenesis control. The chain is GTPase Obg from Streptococcus suis (strain 98HAH33).